The following is a 253-amino-acid chain: 5'/3'-nucleotidase SurE (253 aa).

Positions 8, 9, 39, and 92 each coordinate a divalent metal cation.

This sequence belongs to the SurE nucleotidase family. Requires a divalent metal cation as cofactor.

It localises to the cytoplasm. The enzyme catalyses a ribonucleoside 5'-phosphate + H2O = a ribonucleoside + phosphate. The catalysed reaction is a ribonucleoside 3'-phosphate + H2O = a ribonucleoside + phosphate. It carries out the reaction [phosphate](n) + H2O = [phosphate](n-1) + phosphate + H(+). Its function is as follows. Nucleotidase with a broad substrate specificity as it can dephosphorylate various ribo- and deoxyribonucleoside 5'-monophosphates and ribonucleoside 3'-monophosphates with highest affinity to 3'-AMP. Also hydrolyzes polyphosphate (exopolyphosphatase activity) with the preference for short-chain-length substrates (P20-25). Might be involved in the regulation of dNTP and NTP pools, and in the turnover of 3'-mononucleotides produced by numerous intracellular RNases (T1, T2, and F) during the degradation of various RNAs. The polypeptide is 5'/3'-nucleotidase SurE (Citrobacter koseri (strain ATCC BAA-895 / CDC 4225-83 / SGSC4696)).